The chain runs to 922 residues: Histidine kinase 5 (922 aa).

Coiled coils occupy residues 86 to 120 and 169 to 205; these read MQDN…EEYK and KQKA…SQSA. The Histidine kinase domain occupies 373 to 614; the sequence is TMSHEIRSPL…TFTFILPYKV (242 aa). The residue at position 376 (His376) is a Phosphohistidine; by autocatalysis. Disordered regions lie at residues 620–639 and 728–773; these read YSDD…EPDD and NGRC…TEVK. Residues 738-747 are compositionally biased toward low complexity; it reads SCSSSQASSE. A compositionally biased stretch (basic and acidic residues) spans 761 to 773; sequence SHREEEKAETEVK. The 143-residue stretch at 779–921 folds into the Response regulatory domain; the sequence is KILLVEDNKI…KLRECLQQYL (143 aa). Mg(2+)-binding residues include Asp785, Asp828, and Cys830. The residue at position 828 (Asp828) is a 4-aspartylphosphate.

Interacts with AHP1, APH2, APH3, APH5 and APH6, but not with APH4. Present in light-grown but not in etiolated seedlings. Mostly expressed in roots flowers and siliques, and, to a lower extent, in stems and leaves, especially in guard cells.

It localises to the cell membrane. Its subcellular location is the cytoplasm. It catalyses the reaction ATP + protein L-histidine = ADP + protein N-phospho-L-histidine.. In terms of biological role, functions as a histidine kinase and transmits the stress signal to a downstream MAPK cascade. This protein undergoes an ATP-dependent autophosphorylation at a conserved histidine residue in the kinase core, and a phosphoryl group is then transferred to a conserved aspartate residue in the receiver domain. Negative regulator of the ETR1-dependent abscisic acid (ABA) and ethylene signaling pathway that inhibits the root elongation. Promotes stomatal closure. Regulates stomatal opening by integrating multiple signals via hydrogen peroxide H(2)O(2) homeostasis in guard cells in an ABA-independent manner. May contribute to basal defense mechanisms by closing stomata in the presence of bacterial pathogens. Regulates both hormone levels and ROS production in response to stress. Required for full immunity to bacterial pathogen and necrotrophic fungus. The sequence is that of Histidine kinase 5 (AHK5) from Arabidopsis thaliana (Mouse-ear cress).